Here is a 623-residue protein sequence, read N- to C-terminus: Chaperone protein HtpG (623 aa).

The interval 1–336 (MVSKQQTMGF…ASDLPLNISR (336 aa)) is a; substrate-binding. Residues 337 to 550 (EILQDNKQVE…EQDMGLEMQR (214 aa)) are b. Positions 551–623 (ILQAAGQQVP…NRVNRLLVSS (73 aa)) are c.

This sequence belongs to the heat shock protein 90 family. As to quaternary structure, homodimer.

The protein resides in the cytoplasm. In terms of biological role, molecular chaperone. Has ATPase activity. This Legionella pneumophila subsp. pneumophila (strain Philadelphia 1 / ATCC 33152 / DSM 7513) protein is Chaperone protein HtpG.